The chain runs to 537 residues: Tegument protein BRRF2 (537 aa).

Disordered regions lie at residues 321 to 366, 378 to 398, 414 to 466, and 486 to 537; these read RPRF…AVPP, AKQNRGGMGSLHLAKPEETSP, SKQH…DEEF, and GLRV…LSVV. Residues 334-347 are compositionally biased toward polar residues; the sequence is EPQQTCSQLTSRGN. Positions 423 to 441 are enriched in low complexity; that stretch reads SSQAAPSFSSVAPVASLSG. Positions 492–517 are enriched in acidic residues; that stretch reads DEDEDGSEDGEFSDLDLSDSDHEGDE.

This sequence belongs to the lymphocryptovirus BRRF2 family.

Its subcellular location is the virion tegument. This chain is Tegument protein BRRF2, found in Homo sapiens (Human).